The sequence spans 129 residues: Small ribosomal subunit protein uS11 (129 aa).

Belongs to the universal ribosomal protein uS11 family. In terms of assembly, part of the 30S ribosomal subunit. Interacts with proteins S7 and S18. Binds to IF-3.

In terms of biological role, located on the platform of the 30S subunit, it bridges several disparate RNA helices of the 16S rRNA. Forms part of the Shine-Dalgarno cleft in the 70S ribosome. This Salmonella typhi protein is Small ribosomal subunit protein uS11.